The following is a 529-amino-acid chain: Probable E3 ubiquitin-protein ligase MGRN1 (529 aa).

Residues E275–C314 form an RING-type zinc finger. Disordered stretches follow at residues S341–G362 and E396–C529. Polar residues-rich tracts occupy residues A449–E463 and N477–V487. The segment covering S501–S511 has biased composition (low complexity). The segment covering E520–C529 has biased composition (polar residues).

In terms of processing, autoubiquitinated in vitro.

The enzyme catalyses S-ubiquitinyl-[E2 ubiquitin-conjugating enzyme]-L-cysteine + [acceptor protein]-L-lysine = [E2 ubiquitin-conjugating enzyme]-L-cysteine + N(6)-ubiquitinyl-[acceptor protein]-L-lysine.. It functions in the pathway protein modification; protein ubiquitination. Functionally, E3 ubiquitin-protein ligase. Also acts as a negative regulator of hedgehog signaling. The polypeptide is Probable E3 ubiquitin-protein ligase MGRN1 (mgrn1) (Danio rerio (Zebrafish)).